The primary structure comprises 224 residues: Cytidylate kinase (224 aa).

Residue 14-22 (GPAGSGKST) participates in ATP binding.

This sequence belongs to the cytidylate kinase family. Type 1 subfamily.

The protein resides in the cytoplasm. It catalyses the reaction CMP + ATP = CDP + ADP. The enzyme catalyses dCMP + ATP = dCDP + ADP. The polypeptide is Cytidylate kinase (Mycoplasmoides gallisepticum (strain R(low / passage 15 / clone 2)) (Mycoplasma gallisepticum)).